Consider the following 268-residue polypeptide: Indole-3-glycerol phosphate synthase 2 (268 aa).

Belongs to the TrpC family.

The enzyme catalyses 1-(2-carboxyphenylamino)-1-deoxy-D-ribulose 5-phosphate + H(+) = (1S,2R)-1-C-(indol-3-yl)glycerol 3-phosphate + CO2 + H2O. It participates in amino-acid biosynthesis; L-tryptophan biosynthesis; L-tryptophan from chorismate: step 4/5. The protein is Indole-3-glycerol phosphate synthase 2 (trpC2) of Ralstonia nicotianae (strain ATCC BAA-1114 / GMI1000) (Ralstonia solanacearum).